The following is a 438-amino-acid chain: Polycomb protein eed-A (438 aa).

Positions 1-67 are disordered; the sequence is MSEASGRAAG…NAPGRKAWGK (67 aa). Over residues 40–57 the composition is skewed to polar residues; sequence SIESGTNTERPDTPTNAA. WD repeat units lie at residues 88 to 131, 139 to 182, 185 to 225, 231 to 270, 301 to 338, 356 to 396, and 405 to 438; these read DHNQ…DIRL, DADE…CIKH, GHGN…LVAI, GHRD…MKTA, IHRN…DDID, SQCD…PHKA, and KCAS…DRLR.

Belongs to the WD repeat ESC family. Component of the prc2/eed-ezh2 complex. Interacts with yy1. Can interact with ezh2, hdac1 and taf9.

It localises to the nucleus. Functionally, polycomb group (PcG) protein. Component of the prc2/eed-ezh2 complex, which methylates 'Lys-9' and 'Lys-27' of histone H3, leading to transcriptional repression of the affected target gene. In Xenopus laevis (African clawed frog), this protein is Polycomb protein eed-A (eed-a).